The sequence spans 155 residues: Large ribosomal subunit protein uL13 (155 aa).

It belongs to the universal ribosomal protein uL13 family. Part of the 50S ribosomal subunit.

This protein is one of the early assembly proteins of the 50S ribosomal subunit, although it is not seen to bind rRNA by itself. It is important during the early stages of 50S assembly. This is Large ribosomal subunit protein uL13 from Rickettsia typhi (strain ATCC VR-144 / Wilmington).